The following is a 1279-amino-acid chain: ATP-dependent helicase/nuclease subunit A (1279 aa).

In terms of domain architecture, UvrD-like helicase ATP-binding spans 4–499 (TKWTDEQRQA…VKLFKNFRSR (496 aa)). Residue 25–32 (AGAGAGKT) coordinates ATP. A UvrD-like helicase C-terminal domain is found at 526-853 (EEALKVGASY…RIMSIHKSKG (328 aa)).

The protein belongs to the helicase family. AddA subfamily. In terms of assembly, heterodimer of AddA and AddB/RexB. Requires Mg(2+) as cofactor.

It catalyses the reaction Couples ATP hydrolysis with the unwinding of duplex DNA by translocating in the 3'-5' direction.. It carries out the reaction ATP + H2O = ADP + phosphate + H(+). In terms of biological role, the heterodimer acts as both an ATP-dependent DNA helicase and an ATP-dependent, dual-direction single-stranded exonuclease. Recognizes the chi site generating a DNA molecule suitable for the initiation of homologous recombination. The AddA nuclease domain is required for chi fragment generation; this subunit has the helicase and 3' -&gt; 5' nuclease activities. The polypeptide is ATP-dependent helicase/nuclease subunit A (Clostridium botulinum (strain 657 / Type Ba4)).